We begin with the raw amino-acid sequence, 74 residues long: Acyl carrier protein (74 aa).

The region spanning M1–A73 is the Carrier domain. At S35 the chain carries O-(pantetheine 4'-phosphoryl)serine.

Belongs to the acyl carrier protein (ACP) family. 4'-phosphopantetheine is transferred from CoA to a specific serine of apo-ACP by AcpS. This modification is essential for activity because fatty acids are bound in thioester linkage to the sulfhydryl of the prosthetic group.

The protein localises to the cytoplasm. Its pathway is lipid metabolism; fatty acid biosynthesis. Its function is as follows. Carrier of the growing fatty acid chain in fatty acid biosynthesis. In Streptococcus pneumoniae serotype 4 (strain ATCC BAA-334 / TIGR4), this protein is Acyl carrier protein.